A 312-amino-acid chain; its full sequence is Gamma-soluble NSF attachment protein (312 aa).

A disordered region spans residues 281-312 (KKKAAAPPQAKPEGTAAPAAEEEEDEYAGGLC). The segment covering 285 to 299 (AAPPQAKPEGTAAPA) has biased composition (low complexity). A compositionally biased stretch (acidic residues) spans 300 to 312 (AEEEEDEYAGGLC).

It belongs to the SNAP family. As to quaternary structure, interacts with RAB11FIP5. Interacts with VTI1A.

The protein localises to the membrane. The protein resides in the golgi apparatus. In terms of biological role, required for vesicular transport between the endoplasmic reticulum and the Golgi apparatus. The polypeptide is Gamma-soluble NSF attachment protein (Bos taurus (Bovine)).